The primary structure comprises 250 residues: MAGHSKWHNIRHKKAKMDAKRGQMFTKIIREITVAARQGGGDPEFNPRLRIAIEKAKKANMPVENIERAIKRGTGELEGVSYEEVVYEGYGPEGVAIIVECLTDNRNRTTGEVRHIFTKHGGNLGSSGCVSFLFEEKGVILVPKDKYDEETVFEKAIEAGAEDVITDDEEFYEIRTEPKELYTVKENLEKEGIEIEKAELTRIPTTTVEINDEETATKLMKLLDALEDNDDVQKVYSNFEMSQQLMEKVS.

This sequence belongs to the TACO1 family.

It localises to the cytoplasm. In Persephonella marina (strain DSM 14350 / EX-H1), this protein is Probable transcriptional regulatory protein PERMA_0079.